The primary structure comprises 270 residues: Acyl-[acyl-carrier-protein]--UDP-N-acetylglucosamine O-acyltransferase (270 aa).

The protein belongs to the transferase hexapeptide repeat family. LpxA subfamily. Homotrimer.

The protein resides in the cytoplasm. The catalysed reaction is a (3R)-hydroxyacyl-[ACP] + UDP-N-acetyl-alpha-D-glucosamine = a UDP-3-O-[(3R)-3-hydroxyacyl]-N-acetyl-alpha-D-glucosamine + holo-[ACP]. Its pathway is glycolipid biosynthesis; lipid IV(A) biosynthesis; lipid IV(A) from (3R)-3-hydroxytetradecanoyl-[acyl-carrier-protein] and UDP-N-acetyl-alpha-D-glucosamine: step 1/6. Functionally, involved in the biosynthesis of lipid A, a phosphorylated glycolipid that anchors the lipopolysaccharide to the outer membrane of the cell. This is Acyl-[acyl-carrier-protein]--UDP-N-acetylglucosamine O-acyltransferase from Helicobacter pylori (strain Shi470).